A 247-amino-acid polypeptide reads, in one-letter code: Triosephosphate isomerase (247 aa).

Residues Asn-10 and Lys-12 each contribute to the substrate site. His-94 functions as the Electrophile in the catalytic mechanism. The active-site Proton acceptor is the Glu-164.

This sequence belongs to the triosephosphate isomerase family. In terms of assembly, homodimer.

It carries out the reaction D-glyceraldehyde 3-phosphate = dihydroxyacetone phosphate. The protein operates within carbohydrate biosynthesis; gluconeogenesis. It participates in carbohydrate degradation; glycolysis; D-glyceraldehyde 3-phosphate from glycerone phosphate: step 1/1. The chain is Triosephosphate isomerase (Tpi) from Culex tarsalis (Encephalitis mosquito).